The primary structure comprises 429 residues: Adenylosuccinate synthetase (429 aa).

GTP contacts are provided by residues 12–18 and 40–42; these read GDEGKGK and GHT. The active-site Proton acceptor is the Asp-13. Residues Asp-13 and Gly-40 each contribute to the Mg(2+) site. Residues 13–16, 38–41, Thr-129, Arg-143, Gln-223, Thr-238, and Arg-302 contribute to the IMP site; these read DEGK and NAGH. The Proton donor role is filled by His-41. 298–304 lines the substrate pocket; it reads TVTGRKR. Residues Arg-304, 330–332, and 412–414 each bind GTP; these read KLD and STS.

It belongs to the adenylosuccinate synthetase family. As to quaternary structure, homodimer. It depends on Mg(2+) as a cofactor.

The protein resides in the cytoplasm. It catalyses the reaction IMP + L-aspartate + GTP = N(6)-(1,2-dicarboxyethyl)-AMP + GDP + phosphate + 2 H(+). Its pathway is purine metabolism; AMP biosynthesis via de novo pathway; AMP from IMP: step 1/2. Plays an important role in the de novo pathway of purine nucleotide biosynthesis. Catalyzes the first committed step in the biosynthesis of AMP from IMP. The sequence is that of Adenylosuccinate synthetase from Novosphingobium aromaticivorans (strain ATCC 700278 / DSM 12444 / CCUG 56034 / CIP 105152 / NBRC 16084 / F199).